Reading from the N-terminus, the 453-residue chain is Bifunctional protein GlmU (453 aa).

The tract at residues 1–228 is pyrophosphorylase; that stretch reads MPHWAAVIMA…VHEALGINSR (228 aa). UDP-N-acetyl-alpha-D-glucosamine is bound by residues Lys23, Gln73, 78–79, 100–102, Gly139, Glu153, Asn168, and Asn226; these read GT and SGD. Residue Asp102 coordinates Mg(2+). Residue Asn226 coordinates Mg(2+). Residues 229–249 form a linker region; the sequence is AQLAAAEDVARQRILSYWMEE. An N-acetyltransferase region spans residues 250-453; sequence GVTIIDPRST…IENWVRNKKK (204 aa). The UDP-N-acetyl-alpha-D-glucosamine site is built by Arg331 and Lys349. The active-site Proton acceptor is His361. UDP-N-acetyl-alpha-D-glucosamine is bound by residues Tyr364 and Asn375. Acetyl-CoA-binding positions include Ala378, 384-385, Ser403, Ala421, and Arg438; that span reads NY.

In the N-terminal section; belongs to the N-acetylglucosamine-1-phosphate uridyltransferase family. The protein in the C-terminal section; belongs to the transferase hexapeptide repeat family. Homotrimer. The cofactor is Mg(2+).

The protein resides in the cytoplasm. It carries out the reaction alpha-D-glucosamine 1-phosphate + acetyl-CoA = N-acetyl-alpha-D-glucosamine 1-phosphate + CoA + H(+). It catalyses the reaction N-acetyl-alpha-D-glucosamine 1-phosphate + UTP + H(+) = UDP-N-acetyl-alpha-D-glucosamine + diphosphate. It functions in the pathway nucleotide-sugar biosynthesis; UDP-N-acetyl-alpha-D-glucosamine biosynthesis; N-acetyl-alpha-D-glucosamine 1-phosphate from alpha-D-glucosamine 6-phosphate (route II): step 2/2. It participates in nucleotide-sugar biosynthesis; UDP-N-acetyl-alpha-D-glucosamine biosynthesis; UDP-N-acetyl-alpha-D-glucosamine from N-acetyl-alpha-D-glucosamine 1-phosphate: step 1/1. The protein operates within bacterial outer membrane biogenesis; LPS lipid A biosynthesis. Functionally, catalyzes the last two sequential reactions in the de novo biosynthetic pathway for UDP-N-acetylglucosamine (UDP-GlcNAc). The C-terminal domain catalyzes the transfer of acetyl group from acetyl coenzyme A to glucosamine-1-phosphate (GlcN-1-P) to produce N-acetylglucosamine-1-phosphate (GlcNAc-1-P), which is converted into UDP-GlcNAc by the transfer of uridine 5-monophosphate (from uridine 5-triphosphate), a reaction catalyzed by the N-terminal domain. The sequence is that of Bifunctional protein GlmU from Desulfitobacterium hafniense (strain Y51).